We begin with the raw amino-acid sequence, 358 residues long: Phosphoserine aminotransferase (358 aa).

L-glutamate is bound at residue arginine 41. Residues 75-76, tryptophan 100, threonine 148, aspartate 167, and glutamine 190 contribute to the pyridoxal 5'-phosphate site; that span reads AS. Position 191 is an N6-(pyridoxal phosphate)lysine (lysine 191). 233 to 234 is a pyridoxal 5'-phosphate binding site; it reads NT.

Belongs to the class-V pyridoxal-phosphate-dependent aminotransferase family. SerC subfamily. Homodimer. Pyridoxal 5'-phosphate serves as cofactor.

It is found in the cytoplasm. It carries out the reaction O-phospho-L-serine + 2-oxoglutarate = 3-phosphooxypyruvate + L-glutamate. The catalysed reaction is 4-(phosphooxy)-L-threonine + 2-oxoglutarate = (R)-3-hydroxy-2-oxo-4-phosphooxybutanoate + L-glutamate. The protein operates within amino-acid biosynthesis; L-serine biosynthesis; L-serine from 3-phospho-D-glycerate: step 2/3. It functions in the pathway cofactor biosynthesis; pyridoxine 5'-phosphate biosynthesis; pyridoxine 5'-phosphate from D-erythrose 4-phosphate: step 3/5. Catalyzes the reversible conversion of 3-phosphohydroxypyruvate to phosphoserine and of 3-hydroxy-2-oxo-4-phosphonooxybutanoate to phosphohydroxythreonine. The chain is Phosphoserine aminotransferase from Campylobacter jejuni subsp. jejuni serotype O:23/36 (strain 81-176).